The primary structure comprises 97 residues: Sperm protein associated with the nucleus on the X chromosome A (97 aa).

A disordered region spans residues 1 to 49; the sequence is MDKQSSAGGVKRSVPCDSNEANEMMPETPTGDSDPQPAPKKMKTSESST. A Nuclear localization signal motif is present at residues 37-45; it reads PAPKKMKTS.

Belongs to the SPAN-X family. As to expression, detected in testis and sperm.

The protein localises to the cytoplasm. It is found in the nucleus. This chain is Sperm protein associated with the nucleus on the X chromosome A, found in Homo sapiens (Human).